Here is a 136-residue protein sequence, read N- to C-terminus: Small ribosomal subunit protein uS11c (136 aa).

Residues 1–22 (MAKAIPKKGSRGRIGSRKSTRK) are disordered.

This sequence belongs to the universal ribosomal protein uS11 family. In terms of assembly, part of the 30S ribosomal subunit.

The protein localises to the plastid. Its subcellular location is the chloroplast. The polypeptide is Small ribosomal subunit protein uS11c (Lactuca sativa (Garden lettuce)).